Reading from the N-terminus, the 473-residue chain is Ribulose bisphosphate carboxylase large chain (473 aa).

Asn-116 and Thr-166 together coordinate substrate. Lys-168 acts as the Proton acceptor in catalysis. Lys-170 serves as a coordination point for substrate. 3 residues coordinate Mg(2+): Lys-194, Asp-196, and Glu-197. Position 194 is an N6-carboxylysine (Lys-194). His-287 acts as the Proton acceptor in catalysis. Residues Arg-288, His-320, and Ser-372 each coordinate substrate.

This sequence belongs to the RuBisCO large chain family. Type I subfamily. Heterohexadecamer of 8 large chains and 8 small chains. Mg(2+) is required as a cofactor.

It carries out the reaction 2 (2R)-3-phosphoglycerate + 2 H(+) = D-ribulose 1,5-bisphosphate + CO2 + H2O. The catalysed reaction is D-ribulose 1,5-bisphosphate + O2 = 2-phosphoglycolate + (2R)-3-phosphoglycerate + 2 H(+). In terms of biological role, ruBisCO catalyzes two reactions: the carboxylation of D-ribulose 1,5-bisphosphate, the primary event in carbon dioxide fixation, as well as the oxidative fragmentation of the pentose substrate. Both reactions occur simultaneously and in competition at the same active site. The polypeptide is Ribulose bisphosphate carboxylase large chain (Thiomonas intermedia (strain K12) (Thiobacillus intermedius)).